The chain runs to 501 residues: Armadillo repeat-containing protein 6 (501 aa).

At S64 the chain carries Phosphoserine. ARM repeat units lie at residues 220-264 (GVLP…HAHN), 274-318 (KGLK…DLGG), 319-369 (LSIL…RAGG), and 370-412 (TESI…VEGG). Residue H263 is modified to Pros-methylhistidine.

This sequence belongs to the ARMC6 family. In terms of processing, methylated at His-263 by METTL9.

This is Armadillo repeat-containing protein 6 (ARMC6) from Homo sapiens (Human).